The sequence spans 255 residues: Acetylglutamate kinase (255 aa).

Residues Gly-40 to Gly-41, Arg-62, and Asn-157 contribute to the substrate site.

This sequence belongs to the acetylglutamate kinase family. ArgB subfamily.

Its subcellular location is the cytoplasm. The enzyme catalyses N-acetyl-L-glutamate + ATP = N-acetyl-L-glutamyl 5-phosphate + ADP. Its pathway is amino-acid biosynthesis; L-arginine biosynthesis; N(2)-acetyl-L-ornithine from L-glutamate: step 2/4. Functionally, catalyzes the ATP-dependent phosphorylation of N-acetyl-L-glutamate. This is Acetylglutamate kinase from Parabacteroides distasonis (strain ATCC 8503 / DSM 20701 / CIP 104284 / JCM 5825 / NCTC 11152).